A 326-amino-acid polypeptide reads, in one-letter code: Undecaprenyl-phosphate 4-deoxy-4-formamido-L-arabinose transferase (326 aa).

2 consecutive transmembrane segments (helical) span residues Leu236–Val256 and Val270–Leu290.

This sequence belongs to the glycosyltransferase 2 family.

It localises to the cell inner membrane. The enzyme catalyses UDP-4-deoxy-4-formamido-beta-L-arabinose + di-trans,octa-cis-undecaprenyl phosphate = 4-deoxy-4-formamido-alpha-L-arabinopyranosyl di-trans,octa-cis-undecaprenyl phosphate + UDP. The protein operates within glycolipid biosynthesis; 4-amino-4-deoxy-alpha-L-arabinose undecaprenyl phosphate biosynthesis; 4-amino-4-deoxy-alpha-L-arabinose undecaprenyl phosphate from UDP-4-deoxy-4-formamido-beta-L-arabinose and undecaprenyl phosphate: step 1/2. Its pathway is bacterial outer membrane biogenesis; lipopolysaccharide biosynthesis. In terms of biological role, catalyzes the transfer of 4-deoxy-4-formamido-L-arabinose from UDP to undecaprenyl phosphate. The modified arabinose is attached to lipid A and is required for resistance to polymyxin and cationic antimicrobial peptides. The polypeptide is Undecaprenyl-phosphate 4-deoxy-4-formamido-L-arabinose transferase (Proteus mirabilis (strain HI4320)).